The sequence spans 391 residues: MSKRRVVVGMSGGVDSSVTAWLLKEQGYDVVGLFMKNWEDDDDGEYCSTRQDWIDVVSVADLIGIDVEAVNFAAEYKDRVFAEFLREYSAGRTPNPDVLCNAEIKFKAFLDHAMSLDAEMIATGHYARVRERDGRFELLKAFDHTKDQSYFLHRLNQAQLSKTMFPLGEIPKTKVREIAAQIGLPNAKKKDSTGICFIGERPFRDFLNRYLPTKPGPMKTPDGKVVGEHIGLAFYTFGQRKGIGLGGSKSGSGEPWFVAAKDIASNTLYVVQGHDHPWLLSRELVAGNVSWVAGEPPADGFACGAKTRYRQADAACVFGLAATGAEAAGPAGEARFSLAFDDAQWAVTPGQSAVLYDGEICLGGGIIESAATGQPGQATSTGHAPALAEAR.

Residues 9–16 (GMSGGVDS) and methionine 35 contribute to the ATP site. The interaction with target base in tRNA stretch occupies residues 95–97 (NPD). Residue cysteine 100 is the Nucleophile of the active site. Cysteines 100 and 196 form a disulfide. ATP is bound at residue glycine 124. The tract at residues 146–148 (KDQ) is interaction with tRNA. Cysteine 196 functions as the Cysteine persulfide intermediate in the catalytic mechanism. Positions 308-309 (RY) are interaction with tRNA. Residues 372–382 (TGQPGQATSTG) are compositionally biased toward polar residues. Residues 372-391 (TGQPGQATSTGHAPALAEAR) form a disordered region.

Belongs to the MnmA/TRMU family.

Its subcellular location is the cytoplasm. The enzyme catalyses S-sulfanyl-L-cysteinyl-[protein] + uridine(34) in tRNA + AH2 + ATP = 2-thiouridine(34) in tRNA + L-cysteinyl-[protein] + A + AMP + diphosphate + H(+). Its function is as follows. Catalyzes the 2-thiolation of uridine at the wobble position (U34) of tRNA, leading to the formation of s(2)U34. The chain is tRNA-specific 2-thiouridylase MnmA from Burkholderia cenocepacia (strain ATCC BAA-245 / DSM 16553 / LMG 16656 / NCTC 13227 / J2315 / CF5610) (Burkholderia cepacia (strain J2315)).